The sequence spans 339 residues: Erlin-2 (339 aa).

Residues 1-3 (MAQ) lie on the Cytoplasmic side of the membrane. A helical membrane pass occupies residues 4 to 24 (LGAVVAVASSFFCASLFSAVH). Over 25-339 (KIEEGHIGVY…EPLETATKDN (315 aa)) the chain is Extracellular. N-linked (GlcNAc...) asparagine glycosylation occurs at Asn106. The interaction with ERLIN1 stretch occupies residues 177–309 (EAIRRNYELM…DIPNMFMDSA (133 aa)). Residue Lys267 is modified to N6-acetyllysine.

It belongs to the band 7/mec-2 family. Forms a heteromeric complex with ERLIN1. In complex with ERLIN1, interacts with RNF170. Interacts with activated ITPR1, independently of the degree of ITPR1 polyubiquitination. Interacts with SCAP, INSIG1, SREBF1 and SREBF2 under cholesterol sufficiency conditions; indicative for an association with the SCAP-SREBP-INSIG complex. Probably part of an AMFR/gp78 and INSIG1-containing ubiquitin ligase complex involved in ERAD of HMGCR. Interacts with TMUB1; TMUB1 bridges the association with AMFR. Interacts with SYVN1 and RNF139. Interacts with TMEM259. Interacts with TMEM41B. Post-translationally, deubiquitinated by USP25; leading to stabilization.

The protein localises to the endoplasmic reticulum membrane. Its function is as follows. Component of the ERLIN1/ERLIN2 complex which mediates the endoplasmic reticulum-associated degradation (ERAD) of inositol 1,4,5-trisphosphate receptors (IP3Rs) such as ITPR1. Promotes sterol-accelerated ERAD of HMGCR probably implicating an AMFR/gp78-containing ubiquitin ligase complex. Involved in regulation of cellular cholesterol homeostasis by regulation the SREBP signaling pathway. May promote ER retention of the SCAP-SREBF complex. This is Erlin-2 from Rattus norvegicus (Rat).